We begin with the raw amino-acid sequence, 624 residues long: Ubiquitin carboxyl-terminal hydrolase 16 (624 aa).

One can recognise a USP domain in the interval 46–620 (VGLSNPANDC…EVYLLFYEIE (575 aa)). Cys-55 (nucleophile) is an active-site residue. Catalysis depends on His-424, which acts as the Proton acceptor. A disordered region spans residues 453 to 573 (SENPSRVASP…ATDTEASASA (121 aa)). A compositionally biased stretch (low complexity) spans 479 to 496 (SPPASTSTNSPLSLTPDS). Positions 518 to 544 (VSFQSTHSSSKQTISPTSAARNSSSLD) are enriched in polar residues. Low complexity predominate over residues 546–573 (ARLSSPASRSSLAERNASATDTEASASA).

The protein belongs to the peptidase C19 family.

It catalyses the reaction Thiol-dependent hydrolysis of ester, thioester, amide, peptide and isopeptide bonds formed by the C-terminal Gly of ubiquitin (a 76-residue protein attached to proteins as an intracellular targeting signal).. This is Ubiquitin carboxyl-terminal hydrolase 16 (ubp16) from Emericella nidulans (strain FGSC A4 / ATCC 38163 / CBS 112.46 / NRRL 194 / M139) (Aspergillus nidulans).